Reading from the N-terminus, the 136-residue chain is Lipoprotein YghG (136 aa).

A signal peptide spans 1 to 24; sequence MSIKQMPGRVLISLLLSVTGLLSG. Cysteine 25 is lipidated: N-palmitoyl cysteine. Residue cysteine 25 is the site of S-diacylglycerol cysteine attachment.

Belongs to the GspS/AspS pilotin family.

It localises to the cell outer membrane. Involved in a type II secretion system (T2SS, formerly general secretion pathway, GSP) for the export of folded proteins across the outer membrane. In a functional T2SS this subunit helps assemble the outer membrane channel. This is Lipoprotein YghG (yghG) from Escherichia coli (strain K12).